An 846-amino-acid polypeptide reads, in one-letter code: Structure-specific endonuclease subunit SLX4 (846 aa).

Disordered regions lie at residues 1 to 20 (MTDHGPDALDAFSPPRVGSA), 84 to 111 (KAGAENLPVHRTKRRKLGNQRDNTAESM), 123 to 164 (QPAE…VKKA), 283 to 322 (RTSKSLDSESLDTGTSSTSEGNGKRKQTKKAKRSAKSKIT), 480 to 513 (DPTPKITPKPGDERQSNLSNKNTERNIPEESSLL), 624 to 690 (PPNA…MGSQ), and 723 to 751 (TLASRSASSHITPQISSAPSQTVPIQTRA). The span at 141 to 153 (KPSEKGQKSEKTA) shows a compositional bias: basic and acidic residues. Residues 293–303 (LDTGTSSTSEG) show a composition bias toward polar residues. Residues 306–318 (KRKQTKKAKRSAK) show a composition bias toward basic residues. 2 stretches are compositionally biased toward polar residues: residues 657–680 (KEITNPARSSWSTAKNLKSSSKPT) and 725–751 (ASRSASSHITPQISSAPSQTVPIQTRA).

This sequence belongs to the SLX4 family. Forms a heterodimer with SLX1. In terms of processing, phosphorylated in response to DNA damage.

It is found in the nucleus. In terms of biological role, regulatory subunit of the SLX1-SLX4 structure-specific endonuclease that resolves DNA secondary structures generated during DNA repair and recombination. Has endonuclease activity towards branched DNA substrates, introducing single-strand cuts in duplex DNA close to junctions with ss-DNA. In Arthroderma otae (strain ATCC MYA-4605 / CBS 113480) (Microsporum canis), this protein is Structure-specific endonuclease subunit SLX4.